Reading from the N-terminus, the 44-residue chain is uncharacterized protein (44 aa).

A signal peptide spans 1–28; that stretch reads MLRDLGRRVAIAAILSGIILGGMSISLA.

This is an uncharacterized protein from Bacillus subtilis (strain 168).